Here is a 288-residue protein sequence, read N- to C-terminus: MQQSTLLKPVSCYGIGVHSGKRTQLTIEPTKENTGIIFIRTDISSENNYIEASYFNVSDTLLSTTISNDHKVQISTIEHLMAALWGCSIDNAIIKIDGPEVPIMDGSSKPFVFMIECAGKKLQNAPKKYLKILKDIKVVHKDCELYCTPSDHMTVDLTIDFSSKAIGRQNLSFRDQESFTKNIADARTFGFIRDVDYLKSKGLAQGASFENAIGIDEQDKILNPNGLRYEDEFVRHKLLDLFGDLYTNGTSIVSAIKGYKTSHALNNELLHRIFSDTTSYKFVTSSEL.

Positions 79, 236, and 240 each coordinate Zn(2+). Histidine 263 acts as the Proton donor in catalysis.

The protein belongs to the LpxC family. It depends on Zn(2+) as a cofactor.

It carries out the reaction a UDP-3-O-[(3R)-3-hydroxyacyl]-N-acetyl-alpha-D-glucosamine + H2O = a UDP-3-O-[(3R)-3-hydroxyacyl]-alpha-D-glucosamine + acetate. Its pathway is glycolipid biosynthesis; lipid IV(A) biosynthesis; lipid IV(A) from (3R)-3-hydroxytetradecanoyl-[acyl-carrier-protein] and UDP-N-acetyl-alpha-D-glucosamine: step 2/6. Its function is as follows. Catalyzes the hydrolysis of UDP-3-O-myristoyl-N-acetylglucosamine to form UDP-3-O-myristoylglucosamine and acetate, the committed step in lipid A biosynthesis. In Rickettsia conorii (strain ATCC VR-613 / Malish 7), this protein is UDP-3-O-acyl-N-acetylglucosamine deacetylase.